The sequence spans 317 residues: Melanocyte-stimulating hormone receptor (317 aa).

The Extracellular portion of the chain corresponds to 1–37; it reads MPALGSQRRLLGSLNCTPPATLPFTLAPNRTGPQCLE. Asn29 carries an N-linked (GlcNAc...) asparagine glycan. Residues 38–63 traverse the membrane as a helical segment; that stretch reads VSIPDGLFLSLGLVSLVENVLVVAAI. Residues 64–72 lie on the Cytoplasmic side of the membrane; it reads AKNRNLHSP. A helical transmembrane segment spans residues 73-93; sequence MYYFICCLAVSDLLVSVSNVL. Residues 94–118 are Extracellular-facing; the sequence is ETAVMLLLEAGVLATQAAVVQQLDN. The chain crosses the membrane as a helical span at residues 119–140; sequence VIDVLICGSMVSSLCFLGAIAV. At 141–163 the chain is on the cytoplasmic side; it reads DRYISIFYALRYHSVVTLPRAWR. The helical transmembrane segment at 164 to 183 threads the bilayer; the sequence is IIAAIWVASILTSLLFITYY. Over 184–191 the chain is Extracellular; sequence NHKVILLC. Residues 192 to 211 form a helical membrane-spanning segment; it reads LVGLFIAMLALMAVLYVHML. The Cytoplasmic segment spans residues 212 to 240; sequence ARACQHARGIARLQKRQRPIHQGFGLKGA. Residues 241–266 form a helical membrane-spanning segment; that stretch reads ATLTILLGVFFLCWGPFFLHLSLIVL. Over 267–279 the chain is Extracellular; it reads CPQHPTCGCIFKN. Residues 280 to 300 form a helical membrane-spanning segment; that stretch reads FNLFLALIICNAIVDPLIYAF. Over 301-317 the chain is Cytoplasmic; sequence RSQELRKTLQEVLQCSW. A lipid anchor (S-palmitoyl cysteine) is attached at Cys315.

The protein belongs to the G-protein coupled receptor 1 family. In terms of assembly, interacts with MGRN1, but does not undergo MGRN1-mediated ubiquitination; this interaction competes with GNAS-binding and thus inhibits agonist-induced cAMP production. Interacts with OPN3; the interaction results in a decrease in MC1R-mediated cAMP signaling and ultimately a decrease in melanin production in melanocytes. As to expression, highly expressed in the testis.

It is found in the cell membrane. Receptor for MSH (alpha, beta) and ACTH. Does not seem to be active with gamma-MSH. The activity of this receptor is mediated by G proteins which activate adenylate cyclase. Mediates melanogenesis, the production of eumelanin (black/brown) and phaeomelanin (red/yellow), via regulation of cAMP signaling in melanocytes. In Bos taurus (Bovine), this protein is Melanocyte-stimulating hormone receptor (MC1R).